Consider the following 151-residue polypeptide: Probable transcriptional regulator syrB2 (151 aa).

The disordered stretch occupies residues 1-61 (MADESNTGSI…PRRYSEQQRK (61 aa)). Positions 11–23 (AAAVAPNADVKAP) are enriched in low complexity. The span at 24–35 (AAKKKRSPRRQK) shows a compositional bias: basic residues.

Belongs to the SyrB family.

Seems to affect the transcription of cya3. May be negatively autoregulated. This chain is Probable transcriptional regulator syrB2 (syrB2), found in Rhizobium meliloti (strain 1021) (Ensifer meliloti).